Here is a 337-residue protein sequence, read N- to C-terminus: UDP-3-O-acylglucosamine N-acyltransferase (337 aa).

The active-site Proton acceptor is His238.

Belongs to the transferase hexapeptide repeat family. LpxD subfamily. As to quaternary structure, homotrimer.

It catalyses the reaction a UDP-3-O-[(3R)-3-hydroxyacyl]-alpha-D-glucosamine + a (3R)-hydroxyacyl-[ACP] = a UDP-2-N,3-O-bis[(3R)-3-hydroxyacyl]-alpha-D-glucosamine + holo-[ACP] + H(+). Its pathway is bacterial outer membrane biogenesis; LPS lipid A biosynthesis. Its function is as follows. Catalyzes the N-acylation of UDP-3-O-acylglucosamine using 3-hydroxyacyl-ACP as the acyl donor. Is involved in the biosynthesis of lipid A, a phosphorylated glycolipid that anchors the lipopolysaccharide to the outer membrane of the cell. The chain is UDP-3-O-acylglucosamine N-acyltransferase from Xanthomonas oryzae pv. oryzae (strain KACC10331 / KXO85).